The sequence spans 396 residues: Vacuolar protease A (396 aa).

The signal sequence occupies residues 1–17 (MKGALLTAAMLLGSAQA). A propeptide spans 18-70 (GVHTMKLKKVPLAEQLESVPIDVQVQHLGQKYTGLRTESHTQAMFKATDAQVS) (activation peptide). The 308-residue stretch at 85-392 (YFSEITIGTP…DLGADTVGIA (308 aa)) folds into the Peptidase A1 domain. The active site involves aspartate 103. Cysteines 116 and 121 form a disulfide. N-linked (GlcNAc...) asparagine glycosylation occurs at asparagine 138. The active site involves aspartate 284. A disulfide bridge connects residues cysteine 318 and cysteine 351. Asparagine 335 carries an N-linked (GlcNAc...) asparagine glycan.

The protein belongs to the peptidase A1 family.

It localises to the vacuole. The protein is Vacuolar protease A (pep-4) of Neurospora crassa (strain ATCC 24698 / 74-OR23-1A / CBS 708.71 / DSM 1257 / FGSC 987).